The sequence spans 569 residues: MIKISRKQYASMYGPTTGDKVRLGDTNLFAEIEKDYTLYGEEIKFGGGKTIRDGMAQSASTYTNELDAVITNAMIIDYTGIYKADIGIKGGKIVGIGKAGNPDTQDSVNEAMVVGAATEVIAGEGQIITAGGIDTHIHFISPTQIPTALYSGVTTMIGGGTGPAAGTNATTCTPGKWNMHQMLRAAESYAMNLGFFGKGNSSNEEGLEEQIKAGALGLKVHEDWGSTPAAINHALNVAQKYDVQVAIHTDTLNEAGCVEDTMKAIDGRTIHTFHTEGAGGGHAPDIIKAAGEPNILPASTNPTIPFTKNTADEHLDMLMVCHHLDKKIKEDVAFADSRIRPETIAAEDTLHDMGIFSITSSDSQAMGRVGEVITRTWQTADKCKNEFGALKEECGENDNFRIKRYISKYTINPAIAHGISEYVGSVEVGKFADLVLWKPSMFGIKPEMILKNGMIVAAKIGDSNASIPTPEPVVYAPMFGSYGKAKYNCAITFVSKIAYDCHIKEELGLERILLPVKNCRNITKKDMKFNDVITPIEVNPETYEVRVNNTKITSKPVEKVSLGQLYCLF.

Residues 131–569 (GGIDTHIHFI…VSLGQLYCLF (439 aa)) form the Urease domain. Residues His136, His138, and Lys219 each coordinate Ni(2+). Residue Lys219 is modified to N6-carboxylysine. His221 is a binding site for substrate. Positions 248 and 274 each coordinate Ni(2+). His322 serves as the catalytic Proton donor. Asp362 is a binding site for Ni(2+).

This sequence belongs to the metallo-dependent hydrolases superfamily. Urease alpha subunit family. As to quaternary structure, heterohexamer of 3 UreA (alpha) and 3 UreB (beta) subunits. It depends on Ni cation as a cofactor. In terms of processing, carboxylation allows a single lysine to coordinate two nickel ions.

Its subcellular location is the cytoplasm. The enzyme catalyses urea + 2 H2O + H(+) = hydrogencarbonate + 2 NH4(+). The protein operates within nitrogen metabolism; urea degradation; CO(2) and NH(3) from urea (urease route): step 1/1. The protein is Urease subunit beta of Helicobacter hepaticus (strain ATCC 51449 / 3B1).